The chain runs to 458 residues: tRNA modification GTPase MnmE (458 aa).

Residues R22, E84, and R123 each coordinate (6S)-5-formyl-5,6,7,8-tetrahydrofolate. The 160-residue stretch at 220–379 (GIATAIIGRP…LEKAIADLFF (160 aa)) folds into the TrmE-type G domain. N230 is a binding site for K(+). GTP contacts are provided by residues 230–235 (NVGKSS), 249–255 (TDIAGTT), and 274–277 (DTAG). S234 provides a ligand contact to Mg(2+). 3 residues coordinate K(+): T249, I251, and T254. A Mg(2+)-binding site is contributed by T255. (6S)-5-formyl-5,6,7,8-tetrahydrofolate is bound at residue K458.

The protein belongs to the TRAFAC class TrmE-Era-EngA-EngB-Septin-like GTPase superfamily. TrmE GTPase family. Homodimer. Heterotetramer of two MnmE and two MnmG subunits. The cofactor is K(+).

The protein localises to the cytoplasm. Exhibits a very high intrinsic GTPase hydrolysis rate. Involved in the addition of a carboxymethylaminomethyl (cmnm) group at the wobble position (U34) of certain tRNAs, forming tRNA-cmnm(5)s(2)U34. In Bacillus thuringiensis (strain Al Hakam), this protein is tRNA modification GTPase MnmE.